Consider the following 505-residue polypeptide: Probable glycine dehydrogenase (decarboxylating) subunit 2 (505 aa).

At Lys-274 the chain carries N6-(pyridoxal phosphate)lysine.

Belongs to the GcvP family. C-terminal subunit subfamily. In terms of assembly, the glycine cleavage system is composed of four proteins: P, T, L and H. In this organism, the P 'protein' is a heterodimer of two subunits. Pyridoxal 5'-phosphate is required as a cofactor.

It catalyses the reaction N(6)-[(R)-lipoyl]-L-lysyl-[glycine-cleavage complex H protein] + glycine + H(+) = N(6)-[(R)-S(8)-aminomethyldihydrolipoyl]-L-lysyl-[glycine-cleavage complex H protein] + CO2. Its function is as follows. The glycine cleavage system catalyzes the degradation of glycine. The P protein binds the alpha-amino group of glycine through its pyridoxal phosphate cofactor; CO(2) is released and the remaining methylamine moiety is then transferred to the lipoamide cofactor of the H protein. The sequence is that of Probable glycine dehydrogenase (decarboxylating) subunit 2 from Sulfurisphaera tokodaii (strain DSM 16993 / JCM 10545 / NBRC 100140 / 7) (Sulfolobus tokodaii).